The chain runs to 265 residues: tRNA pseudouridine synthase A (265 aa).

The active-site Nucleophile is the D53. Y111 contacts substrate.

Belongs to the tRNA pseudouridine synthase TruA family. Homodimer.

The catalysed reaction is uridine(38/39/40) in tRNA = pseudouridine(38/39/40) in tRNA. Functionally, formation of pseudouridine at positions 38, 39 and 40 in the anticodon stem and loop of transfer RNAs. The sequence is that of tRNA pseudouridine synthase A from Acinetobacter baumannii (strain SDF).